The chain runs to 467 residues: Putative vacuolar protein sorting-associated protein TDA6 (467 aa).

Residues 8 to 28 form a helical membrane-spanning segment; that stretch reads ILLWFLIVDLSVIRALVLPPL. N-linked (GlcNAc...) asparagine glycosylation is found at Asn61, Asn124, and Asn141.

It belongs to the VPS62 family.

It localises to the membrane. In terms of biological role, involved in vacuolar protein sorting. This is Putative vacuolar protein sorting-associated protein TDA6 (TDA6) from Saccharomyces cerevisiae (strain ATCC 204508 / S288c) (Baker's yeast).